We begin with the raw amino-acid sequence, 213 residues long: Cytochrome b6 (213 aa).

Residues 30 to 50 traverse the membrane as a helical segment; sequence IFYCLGGLTLLAFLVQCVTGL. C33 contacts heme c. Residues H84 and H98 each contribute to the heme b site. 3 helical membrane-spanning segments follow: residues 88-108, 114-134, and 184-204; these read ANLMILLVFLHMLRVYYTGSF, LNWLAGCFLLVLSLGLAFTGY, and LHVMILPLVTIGFLVAHFIMI. Residues H185 and H200 each coordinate heme b.

It belongs to the cytochrome b family. PetB subfamily. As to quaternary structure, the subunits of the cytochrome bc complex are a Rieske Fe-S protein (PetC), cytochrome b6 (PetB), subunit IV (PetD), and a diheme cytochrome c (PetX). It depends on heme b as a cofactor. Heme c is required as a cofactor.

It localises to the cell membrane. Component of the cytochrome bc complex which donates electrons to the photosynthetic reaction center. The chain is Cytochrome b6 from Heliobacterium mobile (Heliobacillus mobilis).